Here is a 405-residue protein sequence, read N- to C-terminus: Replication factor C large subunit (405 aa).

47 to 54 (GPPGVGKT) provides a ligand contact to ATP.

This sequence belongs to the activator 1 small subunits family. RfcL subfamily. In terms of assembly, heteropentamer composed of four small subunits (RfcS) and one large subunit (RfcL). Probably interacts with PCNA subunit PCNA3.

Part of the RFC clamp loader complex which loads the PCNA sliding clamp onto DNA. The complex possesses DNA-dependent ATPase activity. This Saccharolobus solfataricus (strain ATCC 35092 / DSM 1617 / JCM 11322 / P2) (Sulfolobus solfataricus) protein is Replication factor C large subunit (rfcL).